The following is a 134-amino-acid chain: Fatty acid-binding protein 5 (134 aa).

The Nuclear localization signal signature appears at lysine 23–lysine 33. Residues arginine 109 and arginine 129 to tyrosine 131 contribute to the hexadecanoate site. N-eicosanoyl ethanolamine-binding residues include arginine 109 and tyrosine 131. Arginine 129–tyrosine 131 serves as a coordination point for (9Z,12Z)-octadecadienoate.

Belongs to the calycin superfamily. Fatty-acid binding protein (FABP) family. Monomer.

Its subcellular location is the cytoplasm. It localises to the nucleus. It is found in the synapse. The protein localises to the postsynaptic density. The protein resides in the secreted. The catalysed reaction is hexadecanoate(out) = hexadecanoate(in). It catalyses the reaction (9Z,12Z)-octadecadienoate(out) = (9Z,12Z)-octadecadienoate(in). It carries out the reaction (9Z)-octadecenoate(out) = (9Z)-octadecenoate(in). Its function is as follows. Intracellular carrier for long-chain fatty acids and related active lipids, such as endocannabinoids, that regulate the metabolism and actions of the ligands they bind. In addition to the cytosolic transport, selectively delivers specific fatty acids from the cytosol to the nucleus, wherein they activate nuclear receptors. Delivers retinoic acid to the nuclear receptor peroxisome proliferator-activated receptor delta; which promotes proliferation and survival. May also serve as a synaptic carrier of endocannabinoid at central synapses and thus controls retrograde endocannabinoid signaling. Modulates inflammation by regulating PTGES induction via NF-kappa-B activation, and prostaglandin E2 (PGE2) biosynthesis during inflammation. Has the highest binding affinity for docosahexaenoic acid (DHA) and decreasing relative affinity for eicosapentaenoic acid (EPA), alpha-linolenic acid (ALA), oleic acid, palmitic acid, linoleic acid and stearic acid, respectively. This is Fatty acid-binding protein 5 from Pygoscelis papua (Gentoo penguin).